The chain runs to 900 residues: Minor teichoic acid biosynthesis protein GgaB (900 aa).

This sequence belongs to the glycosyltransferase 2 family.

It participates in cell wall biogenesis; poly(glucopyranosyl N-acetylgalactosamine 1-phosphate) teichoic acid biosynthesis. Functionally, involved in the biosynthesis of galactosamine-containing minor teichoic acid, a non-essential cell wall polymer in B.subtilis 168. In Bacillus subtilis (strain 168), this protein is Minor teichoic acid biosynthesis protein GgaB (ggaB).